The sequence spans 632 residues: MPKTFHEIPRVRPATPVLDRAATPEQLRRLGEAELEELANELRQELLYSVGRTGGHFGAGLGVIELTIALHYVYDTPDDRLVWDVGHQAYPHKILTGRRERMGTLRQKDGLAAFPRRVESEYDTFGVGHSSTSISAALGMAVAARLKGEQRKSIAVIGDGALTAGMAFEALNHAPEVGANMLVVLNDNDMSISRNVGGLSNYLAKILSSRTYSSMREGSKKILSRLPGAWEIARRTEEYAKGMLVPGTLFEELGWNYIGPIDGHDLPTLIATLRNMRDLDGPQFLHVVTKKGKGFAPAEADPITWHAISKLEPVGAPPAPKKPTGPKYSNVFGQWLCDMAAADPRLTGITPAMKEGSDLVAFSERYPDRYFDVAIAEQHAVTLAAGMACEGLKPVVAIYSTFLQRAYDQLIHDVAVQNLDVLFAIDRAGLVGEDGPTHAGSFDLSYLRCIPGMLVMTPSDENEMRRMLTTGYHFEGPAAVRYPRGSGPNASIEPALEPLEIGKAVVRRRGSKVALLVFGVQLPEALQVGDALDATVVDMRFVKPLDEALLRELAGSHELLVTVEENSIMGGAGSAVAEFLAAEGVLRPILHLGLPDYYVEHAKPSEMLAECGLDAAGIEVAVRKRLAALGKA.

Thiamine diphosphate-binding positions include histidine 87 and 128–130 (GHS). A Mg(2+)-binding site is contributed by aspartate 159. Residues 160 to 161 (GA), asparagine 188, phenylalanine 295, and glutamate 377 contribute to the thiamine diphosphate site. Mg(2+) is bound at residue asparagine 188.

The protein belongs to the transketolase family. DXPS subfamily. As to quaternary structure, homodimer. Requires Mg(2+) as cofactor. Thiamine diphosphate is required as a cofactor.

The catalysed reaction is D-glyceraldehyde 3-phosphate + pyruvate + H(+) = 1-deoxy-D-xylulose 5-phosphate + CO2. It functions in the pathway metabolic intermediate biosynthesis; 1-deoxy-D-xylulose 5-phosphate biosynthesis; 1-deoxy-D-xylulose 5-phosphate from D-glyceraldehyde 3-phosphate and pyruvate: step 1/1. Its function is as follows. Catalyzes the acyloin condensation reaction between C atoms 2 and 3 of pyruvate and glyceraldehyde 3-phosphate to yield 1-deoxy-D-xylulose-5-phosphate (DXP). In Stutzerimonas stutzeri (strain A1501) (Pseudomonas stutzeri), this protein is 1-deoxy-D-xylulose-5-phosphate synthase.